A 217-amino-acid chain; its full sequence is Putative N-acetylmuramoyl-L-alanine amidase (217 aa).

One can recognise a MurNAc-LAA domain in the interval 3 to 206 (IAIDAGHGGQ…ISKSISIALK (204 aa)).

It belongs to the N-acetylmuramoyl-L-alanine amidase 3 family.

It localises to the secreted. The enzyme catalyses Hydrolyzes the link between N-acetylmuramoyl residues and L-amino acid residues in certain cell-wall glycopeptides.. In terms of biological role, cell-wall hydrolase involved in septum cleavage during cell division. This Buchnera aphidicola subsp. Baizongia pistaciae (strain Bp) protein is Putative N-acetylmuramoyl-L-alanine amidase (amiB).